The sequence spans 129 residues: Large ribosomal subunit protein uL22 (129 aa).

This sequence belongs to the universal ribosomal protein uL22 family. As to quaternary structure, part of the 50S ribosomal subunit.

Functionally, this protein binds specifically to 23S rRNA; its binding is stimulated by other ribosomal proteins, e.g. L4, L17, and L20. It is important during the early stages of 50S assembly. It makes multiple contacts with different domains of the 23S rRNA in the assembled 50S subunit and ribosome. Its function is as follows. The globular domain of the protein is located near the polypeptide exit tunnel on the outside of the subunit, while an extended beta-hairpin is found that lines the wall of the exit tunnel in the center of the 70S ribosome. The chain is Large ribosomal subunit protein uL22 from Phytoplasma sp. (strain STRAWB2).